The sequence spans 407 residues: Peptidase T (407 aa).

Position 82 (histidine 82) interacts with Zn(2+). The active site involves aspartate 84. Aspartate 143 contacts Zn(2+). Glutamate 177 (proton acceptor) is an active-site residue. Zn(2+) contacts are provided by glutamate 178, aspartate 200, and histidine 382.

The protein belongs to the peptidase M20B family. It depends on Zn(2+) as a cofactor.

It localises to the cytoplasm. The catalysed reaction is Release of the N-terminal residue from a tripeptide.. Cleaves the N-terminal amino acid of tripeptides. This is Peptidase T from Streptococcus pyogenes serotype M6 (strain ATCC BAA-946 / MGAS10394).